Here is a 279-residue protein sequence, read N- to C-terminus: Thymidylate synthase 1 (279 aa).

141–142 (RR) contacts dUMP. Catalysis depends on Cys161, which acts as the Nucleophile. DUMP is bound by residues 181–184 (RSND), Asn192, and 222–224 (HVY). Asp184 contributes to the (6R)-5,10-methylene-5,6,7,8-tetrahydrofolate binding site. (6R)-5,10-methylene-5,6,7,8-tetrahydrofolate is bound at residue Ala278.

This sequence belongs to the thymidylate synthase family. Bacterial-type ThyA subfamily. As to quaternary structure, homodimer.

It localises to the cytoplasm. The enzyme catalyses dUMP + (6R)-5,10-methylene-5,6,7,8-tetrahydrofolate = 7,8-dihydrofolate + dTMP. The protein operates within pyrimidine metabolism; dTTP biosynthesis. Its function is as follows. Catalyzes the reductive methylation of 2'-deoxyuridine-5'-monophosphate (dUMP) to 2'-deoxythymidine-5'-monophosphate (dTMP) while utilizing 5,10-methylenetetrahydrofolate (mTHF) as the methyl donor and reductant in the reaction, yielding dihydrofolate (DHF) as a by-product. This enzymatic reaction provides an intracellular de novo source of dTMP, an essential precursor for DNA biosynthesis. The sequence is that of Thymidylate synthase 1 from Bacillus spizizenii (strain ATCC 23059 / NRRL B-14472 / W23) (Bacillus subtilis subsp. spizizenii).